Consider the following 220-residue polypeptide: Probable septum site-determining protein MinC (220 aa).

This sequence belongs to the MinC family. Interacts with MinD and FtsZ.

Its function is as follows. Cell division inhibitor that blocks the formation of polar Z ring septums. Rapidly oscillates between the poles of the cell to destabilize FtsZ filaments that have formed before they mature into polar Z rings. Prevents FtsZ polymerization. This chain is Probable septum site-determining protein MinC, found in Vibrio campbellii (strain ATCC BAA-1116).